The chain runs to 275 residues: NH(3)-dependent NAD(+) synthetase (275 aa).

Position 46–53 (46–53 (GISGGQDS)) interacts with ATP. Residue Asp52 participates in Mg(2+) binding. Residue Arg140 coordinates deamido-NAD(+). Thr160 contacts ATP. Glu165 serves as a coordination point for Mg(2+). Lys173 and Asp180 together coordinate deamido-NAD(+). The ATP site is built by Lys189 and Thr211. 260-261 (HK) provides a ligand contact to deamido-NAD(+).

Belongs to the NAD synthetase family. As to quaternary structure, homodimer.

The catalysed reaction is deamido-NAD(+) + NH4(+) + ATP = AMP + diphosphate + NAD(+) + H(+). Its pathway is cofactor biosynthesis; NAD(+) biosynthesis; NAD(+) from deamido-NAD(+) (ammonia route): step 1/1. In terms of biological role, catalyzes the ATP-dependent amidation of deamido-NAD to form NAD. Uses ammonia as a nitrogen source. The protein is NH(3)-dependent NAD(+) synthetase of Cronobacter sakazakii (strain ATCC BAA-894) (Enterobacter sakazakii).